The primary structure comprises 375 residues: Prophage integrase IntE (375 aa).

The Core-binding (CB) domain occupies 82-167; sequence ITTSTWLDRY…VLIDVFKEAQ (86 aa). Residues 189 to 375 enclose the Tyr recombinase domain; that stretch reads ITRQRLSLEE…RGKGWSKVAL (187 aa). Catalysis depends on residues arginine 226, lysine 249, histidine 330, arginine 333, and histidine 353. Residues 350–375 are disordered; sequence LLGHKTQQQTDRYHDDRGKGWSKVAL. Catalysis depends on tyrosine 362, which acts as the O-(3'-phospho-DNA)-tyrosine intermediate.

This sequence belongs to the 'phage' integrase family.

In terms of biological role, integrase from the cryptic lambdoid prophage e14. Integrase is necessary for integration of the phage into the host genome by site-specific recombination. In conjunction with excisionase, integrase is also necessary for excision of the prophage from the host genome. The polypeptide is Prophage integrase IntE (intE) (Escherichia coli (strain K12)).